A 332-amino-acid polypeptide reads, in one-letter code: Abl interactor homolog (332 aa).

A coiled-coil region spans residues 73–104 (HITSLLQLQTNEMEKLNIEIQTLTQRVRMIHD). The segment at 152 to 332 (SDINQNGVPP…NDFPPPPPPM (181 aa)) is disordered. Positions 164–206 (NHSNSSANLTSSSGHLAASSTSNSSTPSYQSPSYSSQPTISSG) are enriched in low complexity. The segment covering 221–247 (APPPPSLSVPAAPPPPVMNVPPPPPTS) has biased composition (pro residues). Residues 248 to 257 (QRPSSVNNNA) show a composition bias toward polar residues. Pro residues predominate over residues 277–314 (LPPPPSFGLPPPPTLGDDFPPPPPPPVGSYDFPPPPAR).

Belongs to the ABI family. In terms of assembly, part of a Scar/WAVE complex containing brk1, scrA, abiA, pirA and napA. Interacts with scrA.

Its function is as follows. Involved in regulation of actin and microtubule organization. Required for proper cytokinesis. The protein is Abl interactor homolog (abiA) of Dictyostelium discoideum (Social amoeba).